The chain runs to 286 residues: Lipoyl synthase (286 aa).

Residues Cys-38, Cys-43, Cys-49, Cys-64, Cys-68, Cys-71, and Ser-276 each contribute to the [4Fe-4S] cluster site. A Radical SAM core domain is found at 50-265; it reads WEQGVATFMI…ENIALDMGFL (216 aa).

It belongs to the radical SAM superfamily. Lipoyl synthase family. It depends on [4Fe-4S] cluster as a cofactor.

It localises to the cytoplasm. It catalyses the reaction [[Fe-S] cluster scaffold protein carrying a second [4Fe-4S](2+) cluster] + N(6)-octanoyl-L-lysyl-[protein] + 2 oxidized [2Fe-2S]-[ferredoxin] + 2 S-adenosyl-L-methionine + 4 H(+) = [[Fe-S] cluster scaffold protein] + N(6)-[(R)-dihydrolipoyl]-L-lysyl-[protein] + 4 Fe(3+) + 2 hydrogen sulfide + 2 5'-deoxyadenosine + 2 L-methionine + 2 reduced [2Fe-2S]-[ferredoxin]. Its pathway is protein modification; protein lipoylation via endogenous pathway; protein N(6)-(lipoyl)lysine from octanoyl-[acyl-carrier-protein]: step 2/2. In terms of biological role, catalyzes the radical-mediated insertion of two sulfur atoms into the C-6 and C-8 positions of the octanoyl moiety bound to the lipoyl domains of lipoate-dependent enzymes, thereby converting the octanoylated domains into lipoylated derivatives. The chain is Lipoyl synthase from Karelsulcia muelleri (strain GWSS) (Sulcia muelleri).